A 184-amino-acid polypeptide reads, in one-letter code: Peptide deformylase (184 aa).

The Fe cation site is built by Cys92 and His134. Residue Glu135 is part of the active site. Residue His138 coordinates Fe cation.

It belongs to the polypeptide deformylase family. The cofactor is Fe(2+).

The enzyme catalyses N-terminal N-formyl-L-methionyl-[peptide] + H2O = N-terminal L-methionyl-[peptide] + formate. Removes the formyl group from the N-terminal Met of newly synthesized proteins. Requires at least a dipeptide for an efficient rate of reaction. N-terminal L-methionine is a prerequisite for activity but the enzyme has broad specificity at other positions. In Psychrobacter arcticus (strain DSM 17307 / VKM B-2377 / 273-4), this protein is Peptide deformylase.